A 710-amino-acid chain; its full sequence is Pentatricopeptide repeat-containing protein At1g02060, chloroplastic (710 aa).

A chloroplast-targeting transit peptide spans 1 to 21 (MVSSVPKLHALFVSKSQPVLR). PPR repeat units lie at residues 137-171 (QDRY…GISP), 172-202 (SVLT…MRRT), 208-242 (DSYT…HCNP), 243-277 (DVVT…ATDV), 280-314 (NVVS…GLKP), 315-351 (NAVT…TFAP), 352-386 (DACT…KLHP), 387-421 (DSAS…EVLL), 429-459 (LAAA…LMKR), 463-497 (DPPS…EFVP), 498-532 (DLET…SYLP), and 533-567 (VATT…RIRQ).

Belongs to the PPR family. P subfamily.

It localises to the plastid. The protein localises to the chloroplast. In Arabidopsis thaliana (Mouse-ear cress), this protein is Pentatricopeptide repeat-containing protein At1g02060, chloroplastic.